The chain runs to 70 residues: Large ribosomal subunit protein bL33m (70 aa).

Belongs to the bacterial ribosomal protein bL33 family. As to quaternary structure, component of the mitochondrial large ribosomal subunit (mt-LSU). Mature yeast 74S mitochondrial ribosomes consist of a small (37S) and a large (54S) subunit. The 37S small subunit contains a 15S ribosomal RNA (15S mt-rRNA) and 34 different proteins. The 54S large subunit contains a 21S rRNA (21S mt-rRNA) and 46 different proteins. bL33m stabilizes the tRNA acceptor stem in the E-site.

It localises to the mitochondrion. Component of the mitochondrial ribosome (mitoribosome), a dedicated translation machinery responsible for the synthesis of mitochondrial genome-encoded proteins, including at least some of the essential transmembrane subunits of the mitochondrial respiratory chain. The mitoribosomes are attached to the mitochondrial inner membrane and translation products are cotranslationally integrated into the membrane. The sequence is that of Large ribosomal subunit protein bL33m (MRPL39) from Saccharomyces cerevisiae (strain ATCC 204508 / S288c) (Baker's yeast).